Consider the following 579-residue polypeptide: Golvesin (579 aa).

A required for targeting to the plasma membrane region spans residues 1-75 (MTSVNEHSLL…NNNNNNNNNN (75 aa)). Residues 1-79 (MTSVNEHSLL…NNNNNNSNTG (79 aa)) form a disordered region. Residues 1 to 94 (MTSVNEHSLL…KKKKWNFRKK (94 aa)) are Lumenal-facing. Residues 11–77 (INNNENNDNN…NNNNNNNNSN (67 aa)) show a composition bias toward low complexity. The chain crosses the membrane as a helical; Signal-anchor for type III membrane protein span at residues 95–115 (ILPMIVILIITAIVVCLVVFS). A required for membrane targeting region spans residues 95-118 (ILPMIVILIITAIVVCLVVFSLPF). The Cytoplasmic segment spans residues 116-578 (LPFDSSNTIY…SNDFVIAESP (463 aa)). A required for transfer to endosomes and contractile vacuoles; the protein is trapped in the Golgi region spans residues 559 to 579 (WPSSKGIPGFSNDFVIAESPE).

The protein resides in the contractile vacuole membrane. It localises to the endosome membrane. The protein localises to the golgi apparatus membrane. The protein is Golvesin (gol) of Dictyostelium discoideum (Social amoeba).